Reading from the N-terminus, the 221-residue chain is ATP-dependent Clp protease proteolytic subunit 1, mitochondrial (221 aa).

The N-terminal 25 residues, 1–25 (MLRRLVTSSLSASRSMSASVQSRVG), are a transit peptide targeting the mitochondrion. Catalysis depends on S120, which acts as the Nucleophile. H145 is an active-site residue.

Belongs to the peptidase S14 family. As to quaternary structure, tetradecamer that assembles into a two heptameric rings with a central cavity. As to expression, expressed in the intestine.

It is found in the mitochondrion matrix. The catalysed reaction is Hydrolysis of proteins to small peptides in the presence of ATP and magnesium. alpha-casein is the usual test substrate. In the absence of ATP, only oligopeptides shorter than five residues are hydrolyzed (such as succinyl-Leu-Tyr-|-NHMec, and Leu-Tyr-Leu-|-Tyr-Trp, in which cleavage of the -Tyr-|-Leu- and -Tyr-|-Trp bonds also occurs).. In terms of biological role, clp cleaves peptides in various proteins in a process that requires ATP hydrolysis. Clp may be responsible for a fairly general and central housekeeping function rather than for the degradation of specific substrates. This is ATP-dependent Clp protease proteolytic subunit 1, mitochondrial (clpp-1) from Caenorhabditis elegans.